A 314-amino-acid polypeptide reads, in one-letter code: Probable cell division protein WhiA (314 aa).

The H-T-H motif DNA-binding region spans 282–314 (SLKELGELCRPPVSKSGAAHRMRQLMALAESLE).

The protein belongs to the WhiA family.

Its function is as follows. Involved in cell division and chromosome segregation. The sequence is that of Probable cell division protein WhiA from Symbiobacterium thermophilum (strain DSM 24528 / JCM 14929 / IAM 14863 / T).